A 434-amino-acid polypeptide reads, in one-letter code: APETALA2-like protein 2 (434 aa).

The disordered stretch occupies residues 1–116; that stretch reads MLLDLNVESP…KTRRGPRSRS (116 aa). Low complexity predominate over residues 12–23; sequence RSGTSSSSVLNS. Gly residues predominate over residues 25 to 38; the sequence is DAGGGGGGGGGGGL. A compositionally biased stretch (pro residues) spans 72–87; the sequence is LPPPPPAAPSPAPAWQ. The segment covering 104–113 has biased composition (basic residues); sequence VAKKTRRGPR. Residues 106 to 115 carry the Nuclear localization signal motif; sequence KKTRRGPRSR. 2 consecutive DNA-binding regions (AP2/ERF) follow at residues 118–174 and 210–267; these read QYRG…INFN and KFRG…TNFE. Positions 291-295 match the EAR motif; it reads LDLRI.

It belongs to the AP2/ERF transcription factor family. AP2 subfamily. In terms of assembly, may form homodimer. Interacts with TPR2/ASP1. As to expression, highly expressed in developing panicles and in young seedlings. Present at low levels at all developmental stages.

It is found in the nucleus. Its function is as follows. Probable transcription factor. Involved in spikelet transition. Together with SNB, controls synergistically inflorescence architecture and floral meristem establishment via the regulation of spatio-temporal expression of B- and E-function floral organ identity genes in the lodicules and of spikelet meristem genes. Prevents lemma and palea elongation as well as grain growth. The polypeptide is APETALA2-like protein 2 (Oryza sativa subsp. japonica (Rice)).